Here is a 304-residue protein sequence, read N- to C-terminus: Lipoyl synthase (304 aa).

The tract at residues 1–21 (MAPELIQIDLEPRKPAPKPSW) is disordered. Residues Cys-48, Cys-53, Cys-59, Cys-74, Cys-78, Cys-81, and Ser-287 each contribute to the [4Fe-4S] cluster site. The region spanning 60-276 (WNHKTATFML…KEEAMKMGFR (217 aa)) is the Radical SAM core domain.

The protein belongs to the radical SAM superfamily. Lipoyl synthase family. Requires [4Fe-4S] cluster as cofactor.

It is found in the cytoplasm. The catalysed reaction is [[Fe-S] cluster scaffold protein carrying a second [4Fe-4S](2+) cluster] + N(6)-octanoyl-L-lysyl-[protein] + 2 oxidized [2Fe-2S]-[ferredoxin] + 2 S-adenosyl-L-methionine + 4 H(+) = [[Fe-S] cluster scaffold protein] + N(6)-[(R)-dihydrolipoyl]-L-lysyl-[protein] + 4 Fe(3+) + 2 hydrogen sulfide + 2 5'-deoxyadenosine + 2 L-methionine + 2 reduced [2Fe-2S]-[ferredoxin]. The protein operates within protein modification; protein lipoylation via endogenous pathway; protein N(6)-(lipoyl)lysine from octanoyl-[acyl-carrier-protein]: step 2/2. Catalyzes the radical-mediated insertion of two sulfur atoms into the C-6 and C-8 positions of the octanoyl moiety bound to the lipoyl domains of lipoate-dependent enzymes, thereby converting the octanoylated domains into lipoylated derivatives. This chain is Lipoyl synthase, found in Koribacter versatilis (strain Ellin345).